The following is a 232-amino-acid chain: uncharacterized protein (232 aa).

Transmembrane regions (helical) follow at residues L69 to F91, F104 to L126, F139 to L161, I166 to S188, and F200 to I219.

The protein localises to the cell membrane. This is an uncharacterized protein from Bacillus subtilis (strain 168).